The primary structure comprises 327 residues: Putative HTH-type transcriptional regulatory protein Mevan_1514 (327 aa).

One can recognise an HTH cro/C1-type domain in the interval 128 to 189; it reads LKETREKLNI…IKGINITDYF (62 aa). A DNA-binding region (H-T-H motif) is located at residues 139–158; the sequence is VGELAEFSRVSRKTIYKYEQ.

The sequence is that of Putative HTH-type transcriptional regulatory protein Mevan_1514 from Methanococcus vannielii (strain ATCC 35089 / DSM 1224 / JCM 13029 / OCM 148 / SB).